A 524-amino-acid polypeptide reads, in one-letter code: Excitatory amino acid transporter 3 (524 aa).

Topologically, residues 1–18 (MGKPARKGCEWKRFLKNN) are cytoplasmic. Residues 19–38 (WVLLSTVAAVVLGITTGVLV) form a helical membrane-spanning segment. Residues 39–61 (REHSNLSTLEKFYFAFPGEILMR) lie on the Extracellular side of the membrane. N-linked (GlcNAc...) asparagine glycosylation is present at N43. The chain crosses the membrane as a helical span at residues 62-82 (MLKLIILPLIISSMITGVAAL). Over 83 to 93 (DSNVSGKIGLR) the chain is Cytoplasmic. A helical membrane pass occupies residues 94 to 114 (AVVYYFCTTLIAVILGIVLVV). 3 residues coordinate Na(+): Y98, T101, and T102. The Extracellular segment spans residues 115 to 205 (SIKPGVTQKV…KTKEYKIVGM (91 aa)). N-linked (GlcNAc...) asparagine glycosylation is found at N178 and N195. Residues 206-229 (YSDGINVLGLIVFCLVFGLVIGKM) traverse the membrane as a helical segment. Topologically, residues 230–238 (GEKGQILVD) are cytoplasmic. A helical transmembrane segment spans residues 239 to 266 (FFNALSDATMKIVQIIMCYMPLGILFLI). Topologically, residues 267-286 (AGKIIEVEDWEIFRKLGLYM) are extracellular. Residues 287–308 (ATVLTGLAIHSIVILPLIYFIV) traverse the membrane as a helical segment. At 309–313 (VRKNP) the chain is on the cytoplasmic side. The discontinuously helical intramembrane region spans 314–344 (FRFAMGMAQALLTALMISSSSATLPVTFRCA). Residues S331 and S333 each coordinate L-aspartate. Over 345–353 (EENNQVDKR) the chain is Cytoplasmic. A helical transmembrane segment spans residues 354 to 380 (ITRFVLPVGATINMDGTALYEAVAAVF). Residues G362, T364, N366, and D368 each contribute to the Na(+) site. An L-aspartate-binding site is contributed by T370. Over 381–393 (IAQLNDLDLGIGQ) the chain is Extracellular. An intramembrane region (discontinuously helical) is located at residues 394–427 (IITISITATSASIGAAGVPQAGLVTMVIVLSAVG). Na(+)-binding residues include S405, I406, and A408. Position 411 (V411) interacts with L-aspartate. Over 428–440 (LPAEDVTLIIAVD) the chain is Extracellular. A helical transmembrane segment spans residues 441–462 (WLLDRFRTMVNVLGDAFGTGIV). Residues R447, T448, and N451 each contribute to the L-aspartate site. Na(+) is bound by residues N451 and D455. Over 463–524 (EKLSKKELEQ…TISFTQTSQF (62 aa)) the chain is Cytoplasmic. S517 and S522 each carry phosphoserine.

Belongs to the dicarboxylate/amino acid:cation symporter (DAACS) (TC 2.A.23) family. SLC1A1 subfamily. As to quaternary structure, homotrimer. Interacts with ARL6IP5. Interacts with RTN2 (via N-terminus); the interaction promotes cell surface expression of SLC1A1. Interacts with SORCS2; this interaction is important for normal expression at the cell membrane. Post-translationally, glycosylated. As to expression, expressed in all tissues tested including liver, muscle, testis, ovary, retinoblastoma cell line, neurons and brain (in which there was dense expression in substantia nigra, red nucleus, hippocampus and in cerebral cortical layers).

It is found in the cell membrane. The protein localises to the apical cell membrane. The protein resides in the synapse. It localises to the synaptosome. Its subcellular location is the early endosome membrane. It is found in the late endosome membrane. The protein localises to the recycling endosome membrane. It carries out the reaction K(+)(in) + L-glutamate(out) + 3 Na(+)(out) + H(+)(out) = K(+)(out) + L-glutamate(in) + 3 Na(+)(in) + H(+)(in). The catalysed reaction is K(+)(in) + L-aspartate(out) + 3 Na(+)(out) + H(+)(out) = K(+)(out) + L-aspartate(in) + 3 Na(+)(in) + H(+)(in). It catalyses the reaction D-aspartate(out) + K(+)(in) + 3 Na(+)(out) + H(+)(out) = D-aspartate(in) + K(+)(out) + 3 Na(+)(in) + H(+)(in). The enzyme catalyses K(+)(in) + L-cysteine(out) + 3 Na(+)(out) + H(+)(out) = K(+)(out) + L-cysteine(in) + 3 Na(+)(in) + H(+)(in). Its function is as follows. Sodium-dependent, high-affinity amino acid transporter that mediates the uptake of L-glutamate and also L-aspartate and D-aspartate. Can also transport L-cysteine. Functions as a symporter that transports one amino acid molecule together with two or three Na(+) ions and one proton, in parallel with the counter-transport of one K(+) ion. Mediates Cl(-) flux that is not coupled to amino acid transport; this avoids the accumulation of negative charges due to aspartate and Na(+) symport. Plays an important role in L-glutamate and L-aspartate reabsorption in renal tubuli. Plays a redundant role in the rapid removal of released glutamate from the synaptic cleft, which is essential for terminating the postsynaptic action of glutamate. Contributes to glutathione biosynthesis and protection against oxidative stress via its role in L-glutamate and L-cysteine transport. Negatively regulated by ARL6IP5. The sequence is that of Excitatory amino acid transporter 3 from Homo sapiens (Human).